Here is an 89-residue protein sequence, read N- to C-terminus: Small ribosomal subunit protein uS15 (89 aa).

This sequence belongs to the universal ribosomal protein uS15 family. As to quaternary structure, part of the 30S ribosomal subunit. Forms a bridge to the 50S subunit in the 70S ribosome, contacting the 23S rRNA.

Its function is as follows. One of the primary rRNA binding proteins, it binds directly to 16S rRNA where it helps nucleate assembly of the platform of the 30S subunit by binding and bridging several RNA helices of the 16S rRNA. Functionally, forms an intersubunit bridge (bridge B4) with the 23S rRNA of the 50S subunit in the ribosome. This Leuconostoc citreum (strain KM20) protein is Small ribosomal subunit protein uS15.